The primary structure comprises 1083 residues: Carbamoyl phosphate synthase large chain (1083 aa).

The interval 1–402 (MPKRTDIRKV…AYMKALRSME (402 aa)) is carboxyphosphate synthetic domain. ATP contacts are provided by R129, R169, G175, G176, E208, V210, E215, G241, V242, H243, Q285, and E299. The ATP-grasp 1 domain maps to 133-328 (KAAMQKIGVA…IAKIAAKLAL (196 aa)). 3 residues coordinate Mg(2+): Q285, E299, and N301. The Mn(2+) site is built by Q285, E299, and N301. Residues 403-554 (LGRVGLESPE…YSTYEEEDEA (152 aa)) are oligomerization domain. Residues 555 to 937 (PPTDRQKVLI…AFAKSQLAAG (383 aa)) form a carbamoyl phosphate synthetic domain region. Residues 679–871 (AALIEKLGLK…MAKIAALCMV (193 aa)) enclose the ATP-grasp 2 domain. R715, R754, L756, E761, G787, V788, H789, S790, Q830, and E842 together coordinate ATP. Residues Q830, E842, and N844 each contribute to the Mg(2+) site. The Mn(2+) site is built by Q830, E842, and N844. The 141-residue stretch at 938–1078 (VKLPKSGKVF…QEYLGINAAP (141 aa)) folds into the MGS-like domain. Positions 938–1083 (VKLPKSGKVF…INAAPPGTRR (146 aa)) are allosteric domain.

It belongs to the CarB family. Composed of two chains; the small (or glutamine) chain promotes the hydrolysis of glutamine to ammonia, which is used by the large (or ammonia) chain to synthesize carbamoyl phosphate. Tetramer of heterodimers (alpha,beta)4. Requires Mg(2+) as cofactor. The cofactor is Mn(2+).

It carries out the reaction hydrogencarbonate + L-glutamine + 2 ATP + H2O = carbamoyl phosphate + L-glutamate + 2 ADP + phosphate + 2 H(+). The enzyme catalyses hydrogencarbonate + NH4(+) + 2 ATP = carbamoyl phosphate + 2 ADP + phosphate + 2 H(+). The protein operates within amino-acid biosynthesis; L-arginine biosynthesis; carbamoyl phosphate from bicarbonate: step 1/1. It functions in the pathway pyrimidine metabolism; UMP biosynthesis via de novo pathway; (S)-dihydroorotate from bicarbonate: step 1/3. Large subunit of the glutamine-dependent carbamoyl phosphate synthetase (CPSase). CPSase catalyzes the formation of carbamoyl phosphate from the ammonia moiety of glutamine, carbonate, and phosphate donated by ATP, constituting the first step of 2 biosynthetic pathways, one leading to arginine and/or urea and the other to pyrimidine nucleotides. The large subunit (synthetase) binds the substrates ammonia (free or transferred from glutamine from the small subunit), hydrogencarbonate and ATP and carries out an ATP-coupled ligase reaction, activating hydrogencarbonate by forming carboxy phosphate which reacts with ammonia to form carbamoyl phosphate. The protein is Carbamoyl phosphate synthase large chain of Myxococcus xanthus (strain DK1622).